The primary structure comprises 219 residues: 7-cyano-7-deazaguanine synthase (219 aa).

10–20 contributes to the ATP binding site; it reads FSGGQDSTTCL. Residues C187, C196, C199, and C202 each coordinate Zn(2+).

Belongs to the QueC family. As to quaternary structure, homodimer. Requires Zn(2+) as cofactor.

The enzyme catalyses 7-carboxy-7-deazaguanine + NH4(+) + ATP = 7-cyano-7-deazaguanine + ADP + phosphate + H2O + H(+). It participates in purine metabolism; 7-cyano-7-deazaguanine biosynthesis. In terms of biological role, catalyzes the ATP-dependent conversion of 7-carboxy-7-deazaguanine (CDG) to 7-cyano-7-deazaguanine (preQ(0)). This Lysinibacillus sphaericus (strain C3-41) protein is 7-cyano-7-deazaguanine synthase.